The primary structure comprises 489 residues: GTPase Der (489 aa).

EngA-type G domains are found at residues 30 to 199 (PVVS…KDKP) and 227 to 403 (FRLA…SRSH). GTP-binding positions include 36–43 (GRQNVGKS), 85–89 (DTPGL), 151–154 (NKAD), 233–240 (GKPNSGKS), 280–284 (DTAGI), and 345–348 (NKWD). The 85-residue stretch at 404–488 (RKVSTSELNK…PIRLEFRSDR (85 aa)) folds into the KH-like domain.

It belongs to the TRAFAC class TrmE-Era-EngA-EngB-Septin-like GTPase superfamily. EngA (Der) GTPase family. In terms of assembly, associates with the 50S ribosomal subunit.

Functionally, GTPase that plays an essential role in the late steps of ribosome biogenesis. This is GTPase Der from Leptospira interrogans serogroup Icterohaemorrhagiae serovar Lai (strain 56601).